The sequence spans 238 residues: Ribonuclease 3 (238 aa).

The RNase III domain maps to 11–136; the sequence is RARLEAAIGY…LIAAIYLDGG (126 aa). Glutamate 49 lines the Mg(2+) pocket. Aspartate 53 is an active-site residue. Mg(2+)-binding residues include aspartate 122 and glutamate 125. Residue glutamate 125 is part of the active site. The DRBM domain occupies 161–230; the sequence is DAKTELQEWA…AMKLLEREGV (70 aa). Residues 180–193 show a composition bias toward basic and acidic residues; sequence YRTEDRSGPDHDPR. The disordered stretch occupies residues 180–215; sequence YRTEDRSGPDHDPRFTVTVEVDGIDPETGVDRSKRG.

It belongs to the ribonuclease III family. In terms of assembly, homodimer. Mg(2+) serves as cofactor.

It localises to the cytoplasm. The catalysed reaction is Endonucleolytic cleavage to 5'-phosphomonoester.. In terms of biological role, digests double-stranded RNA. Involved in the processing of primary rRNA transcript to yield the immediate precursors to the large and small rRNAs (23S and 16S). Processes some mRNAs, and tRNAs when they are encoded in the rRNA operon. Processes pre-crRNA and tracrRNA of type II CRISPR loci if present in the organism. This chain is Ribonuclease 3, found in Sinorhizobium medicae (strain WSM419) (Ensifer medicae).